The sequence spans 1448 residues: Glutamate receptor ionotropic, NMDA 2B (1448 aa).

The signal sequence occupies residues 1 to 24; it reads MRPTEACCYLKISLIILFYMGCYA. Over 25-554 the chain is Extracellular; sequence QKHPNMDIAV…SAFLEPFSAD (530 aa). C81 and C316 are disulfide-bonded. 2 residues coordinate Zn(2+): H122 and E279. N-linked (GlcNAc...) asparagine glycosylation is present at N336. 2 disulfides stabilise this stretch: C426/C453 and C433/C454. The L-glutamate site is built by T511 and R516. A helical transmembrane segment spans residues 555 to 573; it reads VWVMMFVMLLIVSAVAVFV. The Cytoplasmic segment spans residues 574–600; sequence FEYFSPVGYNRCLADGREPGGPSFTIG. Positions 601 to 620 form an intramembrane region, discontinuously helical; sequence KAIWLLWGLVFNNSVPVQNP. The tract at residues 601 to 620 is pore-forming; that stretch reads KAIWLLWGLVFNNSVPVQNP. Topologically, residues 621–627 are cytoplasmic; it reads KGTTSKI. Residues 628 to 643 form a helical membrane-spanning segment; sequence MVSVWAFFAVIFLASY. The Extracellular portion of the chain corresponds to 644–819; it reads TANLAAFMIQ…LDIDNMAGVF (176 aa). An N-linked (GlcNAc...) asparagine glycan is attached at N685. L-glutamate-binding positions include 687–688 and D729; that span reads ST. The cysteines at positions 743 and 798 are disulfide-linked. The chain crosses the membrane as a helical span at residues 820–839; that stretch reads YMLAAAMALSLITFIMEHLF. Over 840–1448 the chain is Cytoplasmic; that stretch reads FWQLRHCFMG…EKLSSIESDV (609 aa). Residues 1254 to 1265 show a composition bias toward polar residues; that stretch reads APNSKYPQSPNG. Residues 1254–1277 are disordered; that stretch reads APNSKYPQSPNGKAQKRNRSKLHR. The span at 1267 to 1277 shows a compositional bias: basic residues; sequence AQKRNRSKLHR.

This sequence belongs to the glutamate-gated ion channel (TC 1.A.10.1) family. NR2B/GRIN2B subfamily. In terms of assembly, heterotetramer. Forms heterotetrameric channels composed of two GluN1/zeta subunits (GRIN1), and two identical GluN2/epsilon subunits (GRIN2A, GRIN2B, GRIN2C or GRIN2D) or GluN3 subunits (GRIN3A or GRIN3B) (in vitro). In vivo, the subunit composition may depend on the expression levels of the different subunits. Detected in oocytes.

The protein resides in the cell membrane. The protein localises to the postsynaptic cell membrane. It catalyses the reaction Ca(2+)(in) = Ca(2+)(out). The enzyme catalyses Na(+)(in) = Na(+)(out). The catalysed reaction is K(+)(in) = K(+)(out). Functionally, component of N-methyl-D-aspartate (NMDA) receptors (NMDARs) that function as heterotetrameric, ligand-gated cation channels with high calcium permeability and voltage-dependent block by Mg(2+). Channel activation requires binding of the neurotransmitter L-glutamate to the GluN2 subunit, glycine binding to the GluN1 subunit, plus membrane depolarization to eliminate channel inhibition by Mg(2+). NMDARs mediate simultaneously the potasium efflux and the influx of calcium and sodium. Each GluN2 subunit confers differential attributes to channel properties, including activation, deactivation and desensitization kinetics, pH sensitivity, Ca2(+) permeability, and binding to allosteric modulators. This chain is Glutamate receptor ionotropic, NMDA 2B, found in Xenopus laevis (African clawed frog).